Reading from the N-terminus, the 116-residue chain is Large ribosomal subunit protein bL19 (116 aa).

Belongs to the bacterial ribosomal protein bL19 family.

In terms of biological role, this protein is located at the 30S-50S ribosomal subunit interface and may play a role in the structure and function of the aminoacyl-tRNA binding site. The chain is Large ribosomal subunit protein bL19 from Pseudomonas aeruginosa (strain LESB58).